We begin with the raw amino-acid sequence, 178 residues long: Large ribosomal subunit protein uL6 (178 aa).

Belongs to the universal ribosomal protein uL6 family. In terms of assembly, part of the 50S ribosomal subunit.

In terms of biological role, this protein binds to the 23S rRNA, and is important in its secondary structure. It is located near the subunit interface in the base of the L7/L12 stalk, and near the tRNA binding site of the peptidyltransferase center. The protein is Large ribosomal subunit protein uL6 of Streptococcus pneumoniae (strain JJA).